A 620-amino-acid polypeptide reads, in one-letter code: Guanylate cyclase soluble subunit beta-1 (620 aa).

His-105 lines the heme pocket. A Guanylate cyclase domain is found at 421–554; sequence TILFSGIVGF…NTVNLTSRTE (134 aa).

Belongs to the adenylyl cyclase class-4/guanylyl cyclase family. As to quaternary structure, the active enzyme is formed by a heterodimer of an alpha and a beta subunit. Heterodimer with GUCY1A1. Can also form inactive homodimers in vitro. It depends on heme as a cofactor.

The protein resides in the cytoplasm. It catalyses the reaction GTP = 3',5'-cyclic GMP + diphosphate. With respect to regulation, activated by nitric oxide in the presence of magnesium or manganese ions. Its function is as follows. Mediates responses to nitric oxide (NO) by catalyzing the biosynthesis of the signaling molecule cGMP. The sequence is that of Guanylate cyclase soluble subunit beta-1 (Gucy1b1) from Mus musculus (Mouse).